The following is a 226-amino-acid chain: UPF0758 protein GTNG_2548 (226 aa).

The region spanning 104–226 is the MPN domain; the sequence is VIRCPEDGAK…FISLKEKGYV (123 aa). Residues His-175, His-177, and Asp-188 each contribute to the Zn(2+) site. A JAMM motif motif is present at residues 175–188; that stretch reads HNHPSGDPTPSRED.

Belongs to the UPF0758 family.

The sequence is that of UPF0758 protein GTNG_2548 from Geobacillus thermodenitrificans (strain NG80-2).